We begin with the raw amino-acid sequence, 542 residues long: Chaperonin GroEL (542 aa).

ATP is bound by residues 29 to 32 (TLGP), 86 to 90 (DGTTT), Gly413, and Asp492.

This sequence belongs to the chaperonin (HSP60) family. In terms of assembly, forms a cylinder of 14 subunits composed of two heptameric rings stacked back-to-back. Interacts with the co-chaperonin GroES.

The protein resides in the cytoplasm. The catalysed reaction is ATP + H2O + a folded polypeptide = ADP + phosphate + an unfolded polypeptide.. Together with its co-chaperonin GroES, plays an essential role in assisting protein folding. The GroEL-GroES system forms a nano-cage that allows encapsulation of the non-native substrate proteins and provides a physical environment optimized to promote and accelerate protein folding. The sequence is that of Chaperonin GroEL from Nocardia asteroides.